Consider the following 364-residue polypeptide: UDP-N-acetylglucosamine--N-acetylmuramyl-(pentapeptide) pyrophosphoryl-undecaprenol N-acetylglucosamine transferase (364 aa).

Residues 19–21, N131, R167, S195, I250, and Q295 contribute to the UDP-N-acetyl-alpha-D-glucosamine site; that span reads TGG.

It belongs to the glycosyltransferase 28 family. MurG subfamily.

It is found in the cell inner membrane. It catalyses the reaction di-trans,octa-cis-undecaprenyl diphospho-N-acetyl-alpha-D-muramoyl-L-alanyl-D-glutamyl-meso-2,6-diaminopimeloyl-D-alanyl-D-alanine + UDP-N-acetyl-alpha-D-glucosamine = di-trans,octa-cis-undecaprenyl diphospho-[N-acetyl-alpha-D-glucosaminyl-(1-&gt;4)]-N-acetyl-alpha-D-muramoyl-L-alanyl-D-glutamyl-meso-2,6-diaminopimeloyl-D-alanyl-D-alanine + UDP + H(+). It participates in cell wall biogenesis; peptidoglycan biosynthesis. In terms of biological role, cell wall formation. Catalyzes the transfer of a GlcNAc subunit on undecaprenyl-pyrophosphoryl-MurNAc-pentapeptide (lipid intermediate I) to form undecaprenyl-pyrophosphoryl-MurNAc-(pentapeptide)GlcNAc (lipid intermediate II). The chain is UDP-N-acetylglucosamine--N-acetylmuramyl-(pentapeptide) pyrophosphoryl-undecaprenol N-acetylglucosamine transferase from Xylella fastidiosa (strain Temecula1 / ATCC 700964).